The primary structure comprises 757 residues: Protein lsd90 (757 aa).

4 stretches are compositionally biased toward polar residues: residues 1–11 (MVGTINESMQN), 19–36 (TAQS…SSSK), 51–69 (TAGN…SKNL), and 94–118 (DTSN…STYE). Disordered stretches follow at residues 1–131 (MVGT…SRSS), 224–244 (ERAR…EKQA), 589–633 (AQAE…KSKS), and 657–757 (AYVG…MSNK). Residues 166-604 (DEKTLQDLLE…KVESEYNSVK (439 aa)) are a coiled coil. Positions 589 to 598 (AQAEQSKVES) are enriched in basic and acidic residues. The segment covering 619 to 632 (VTTNEPTDVSTKSK) has biased composition (polar residues). The span at 674-693 (STPSTLPTSASTNAAATTTT) shows a compositional bias: low complexity. An ATP-binding site is contributed by 718-725 (GTTGLGKS).

In terms of biological role, may be involved in the metabolism of very long-chain fatty acid-containing phospholipids (VLCFA-PL). In Schizosaccharomyces pombe (strain 972 / ATCC 24843) (Fission yeast), this protein is Protein lsd90 (lsd90).